A 189-amino-acid polypeptide reads, in one-letter code: Putative manganese efflux pump MntP (189 aa).

6 consecutive transmembrane segments (helical) span residues 3 to 23 (PVSL…AAIG), 41 to 61 (IIFG…GQAA), 65 to 85 (VADW…LHMI), 106 to 128 (WILA…GLAF), 141 to 161 (GLAT…LGAV), and 168 to 188 (MVGG…HLSA).

It belongs to the MntP (TC 9.B.29) family.

It is found in the cell inner membrane. Functionally, probably functions as a manganese efflux pump. In Pseudomonas aeruginosa (strain UCBPP-PA14), this protein is Putative manganese efflux pump MntP.